The following is a 388-amino-acid chain: Bifunctional enzyme IspD/IspF (388 aa).

Residues 1–228 (MRIAALLLAA…GVIDRNLLPR (228 aa)) form a 2-C-methyl-D-erythritol 4-phosphate cytidylyltransferase region. The interval 228 to 388 (RVGLGYDVHA…SIMVPDNGEA (161 aa)) is 2-C-methyl-D-erythritol 2,4-cyclodiphosphate synthase. Asp234 and His236 together coordinate a divalent metal cation. Residues 234 to 236 (DVH) and 260 to 261 (HS) contribute to the 4-CDP-2-C-methyl-D-erythritol 2-phosphate site. His268 serves as a coordination point for a divalent metal cation. 4-CDP-2-C-methyl-D-erythritol 2-phosphate contacts are provided by residues 282-284 (DIG), 358-361 (TTSE), Phe365, and Arg368.

This sequence in the N-terminal section; belongs to the IspD/TarI cytidylyltransferase family. IspD subfamily. In the C-terminal section; belongs to the IspF family. Requires a divalent metal cation as cofactor.

The catalysed reaction is 2-C-methyl-D-erythritol 4-phosphate + CTP + H(+) = 4-CDP-2-C-methyl-D-erythritol + diphosphate. The enzyme catalyses 4-CDP-2-C-methyl-D-erythritol 2-phosphate = 2-C-methyl-D-erythritol 2,4-cyclic diphosphate + CMP. The protein operates within isoprenoid biosynthesis; isopentenyl diphosphate biosynthesis via DXP pathway; isopentenyl diphosphate from 1-deoxy-D-xylulose 5-phosphate: step 2/6. It participates in isoprenoid biosynthesis; isopentenyl diphosphate biosynthesis via DXP pathway; isopentenyl diphosphate from 1-deoxy-D-xylulose 5-phosphate: step 4/6. Functionally, bifunctional enzyme that catalyzes the formation of 4-diphosphocytidyl-2-C-methyl-D-erythritol from CTP and 2-C-methyl-D-erythritol 4-phosphate (MEP) (IspD), and catalyzes the conversion of 4-diphosphocytidyl-2-C-methyl-D-erythritol 2-phosphate (CDP-ME2P) to 2-C-methyl-D-erythritol 2,4-cyclodiphosphate (ME-CPP) with a corresponding release of cytidine 5-monophosphate (CMP) (IspF). The protein is Bifunctional enzyme IspD/IspF of Gluconobacter oxydans (strain 621H) (Gluconobacter suboxydans).